The following is a 289-amino-acid chain: Glyoxylate/succinic semialdehyde reductase 1 (289 aa).

Met-1 bears the N-acetylmethionine mark. NADP(+) is bound by residues 4–18 (GFLG…MSMN) and Thr-95. The active site involves Lys-170. Lys-238 is a binding site for NADP(+).

The protein belongs to the HIBADH-related family. NP60 subfamily.

The protein resides in the cytoplasm. It is found in the cytosol. It catalyses the reaction glycolate + NADP(+) = glyoxylate + NADPH + H(+). The catalysed reaction is 4-hydroxybutanoate + NADP(+) = succinate semialdehyde + NADPH + H(+). Its activity is regulated as follows. The ratio of NADPH/NADP(+) may regulate enzymatic activity. Functionally, catalyzes the NADPH-dependent reduction of glyoxylate to glycolate as well as succinic semialdehyde (SSA) to gamma-hydroxybutyrate in vitro. May function in redox homeostasis and play a role in oxidative stress tolerance by detoxifying glyoxylate and SSA generated in glycolate metabolism and GABA metabolism, respectively. This chain is Glyoxylate/succinic semialdehyde reductase 1 (GLYR1), found in Arabidopsis thaliana (Mouse-ear cress).